We begin with the raw amino-acid sequence, 287 residues long: Universal stress protein Slr1230 (287 aa).

The protein belongs to the universal stress protein A family.

This Synechocystis sp. (strain ATCC 27184 / PCC 6803 / Kazusa) protein is Universal stress protein Slr1230.